The following is a 120-amino-acid chain: Large ribosomal subunit protein uL18 (120 aa).

The protein belongs to the universal ribosomal protein uL18 family. As to quaternary structure, part of the 50S ribosomal subunit; part of the 5S rRNA/L5/L18/L25 subcomplex. Contacts the 5S and 23S rRNAs.

This is one of the proteins that bind and probably mediate the attachment of the 5S RNA into the large ribosomal subunit, where it forms part of the central protuberance. The chain is Large ribosomal subunit protein uL18 from Brevibacillus brevis (strain 47 / JCM 6285 / NBRC 100599).